The chain runs to 133 residues: MIVRNVKDVIGTQDEVRTDTWVSRRVLLKKDGMGFSFHETTIFPGGRTHIHYKNHLEAVWCIEGDGSIETIADGKKYELGPGVVYALNEHDEHWLCGGKEPLRVICVFNPPLTGQEVHDADGVYALPAEAQAA.

It belongs to the ectoine synthase family.

The enzyme catalyses (2S)-4-acetamido-2-aminobutanoate = L-ectoine + H2O. The protein operates within amine and polyamine biosynthesis; ectoine biosynthesis; L-ectoine from L-aspartate 4-semialdehyde: step 3/3. In terms of biological role, catalyzes the circularization of gamma-N-acetyl-alpha,gamma-diaminobutyric acid (ADABA) to ectoine (1,4,5,6-tetrahydro-2-methyl-4-pyrimidine carboxylic acid), which is an excellent osmoprotectant. This is L-ectoine synthase from Bordetella petrii (strain ATCC BAA-461 / DSM 12804 / CCUG 43448).